Here is a 244-residue protein sequence, read N- to C-terminus: Nicotinamidase 1 (244 aa).

Belongs to the isochorismatase family. As to expression, expressed in roots and stems, and at lower levels in flowers, siliques and leaves.

It catalyses the reaction nicotinamide + H2O = nicotinate + NH4(+). The protein operates within cofactor biosynthesis; nicotinate biosynthesis; nicotinate from nicotinamide: step 1/1. Its function is as follows. Catalyzes the deamidation of nicotinamide, an early step in the NAD(+) salvage pathway. Prevents the accumulation of intracellular nicotinamide, a known inhibitor of poly(ADP-ribose) polymerases (PARP enzymes). In Arabidopsis thaliana (Mouse-ear cress), this protein is Nicotinamidase 1.